The following is a 601-amino-acid chain: Group B oligopeptidase PepB (601 aa).

Zn(2+) is bound at residue His-386. Glu-387 is a catalytic residue. 2 residues coordinate Zn(2+): His-390 and His-393.

It belongs to the peptidase M3B family. Requires Zn(2+) as cofactor.

Its subcellular location is the cytoplasm. Functionally, has oligopeptidase activity and degrades a variety of small bioactive peptides, including bradykinin, neurotensin, and peptide fragments of substance P and adrenocorticotropin. Also hydrolyzes the synthetic collagen-like substrate N-(3-[2-furyl]acryloyl)-Leu-Gly-Pro-Ala (FALGPA). The polypeptide is Group B oligopeptidase PepB (pepB) (Streptococcus agalactiae serotype III (strain NEM316)).